The chain runs to 83 residues: Cytochrome c oxidase subunit 12, mitochondrial (83 aa).

Residues 24 to 67 (TKHCWQSYVDYHKCVNMKGEDFAPCKVFWKTYNALCPLDWIEKW) form the CHCH domain. Positions 27–37 (CWQSYVDYHKC) match the Cx9C motif motif. Intrachain disulfides connect cysteine 27/cysteine 59 and cysteine 37/cysteine 48. Residues 48–59 (CKVFWKTYNALC) carry the Cx10C motif motif. Serine 82 carries the phosphoserine modification.

The protein belongs to the cytochrome c oxidase subunit 6B family. Component of the cytochrome c oxidase (complex IV, CIV), a multisubunit enzyme composed of 12 subunits. The complex is composed of a catalytic core of 3 subunits COX1, COX2 and COX3, encoded in the mitochondrial DNA, and 9 supernumerary subunits COX4, COX5A (or COX5B), COX6, COX7, COX8, COX9, COX12, COX13 and COX26, which are encoded in the nuclear genome. The complex exists as a monomer or a dimer and forms supercomplexes (SCs) in the inner mitochondrial membrane with a dimer of ubiquinol-cytochrome c oxidoreductase (cytochrome b-c1 complex, complex III, CIII), resulting in 2 different assemblies (supercomplexes III(2)IV and III(2)IV(2)).

The protein resides in the mitochondrion inner membrane. Its pathway is energy metabolism; oxidative phosphorylation. Component of the cytochrome c oxidase, the last enzyme in the mitochondrial electron transport chain which drives oxidative phosphorylation. The respiratory chain contains 3 multisubunit complexes succinate dehydrogenase (complex II, CII), ubiquinol-cytochrome c oxidoreductase (cytochrome b-c1 complex, complex III, CIII) and cytochrome c oxidase (complex IV, CIV), that cooperate to transfer electrons derived from NADH and succinate to molecular oxygen, creating an electrochemical gradient over the inner membrane that drives transmembrane transport and the ATP synthase. Cytochrome c oxidase is the component of the respiratory chain that catalyzes the reduction of oxygen to water. Electrons originating from reduced cytochrome c in the intermembrane space (IMS) are transferred via the dinuclear copper A center (CU(A)) of COX2 and heme A of COX1 to the active site in COX1, a binuclear center (BNC) formed by heme A3 and copper B (CU(B)). The BNC reduces molecular oxygen to 2 water molecules unsing 4 electrons from cytochrome c in the IMS and 4 protons from the mitochondrial matrix. This Saccharomyces cerevisiae (strain ATCC 204508 / S288c) (Baker's yeast) protein is Cytochrome c oxidase subunit 12, mitochondrial (COX12).